Consider the following 241-residue polypeptide: Viral CASP8 and FADD-like apoptosis regulator (241 aa).

DED domains are found at residues 8–78 (PSLP…SRFG) and 95–175 (RYRK…QLVE). Residues 212 to 241 (CMPVQESSDSPELLRTPVQESSSDSPEQTT) form a disordered region. Over residues 229-241 (VQESSSDSPEQTT) the composition is skewed to polar residues.

As to quaternary structure, associates with the death-inducing signaling complex (DISC) formed by TNFRSF6/FAS, FADD and CASP8. Interacts with FADD. Interacts with host TRAF2. Interacts with host NEMO/IKBKG (via N-terminus). Interacts with host SH3BP4; this interaction plays an important in the suppression of host autophagy.

It is found in the host cytoplasm. It localises to the host nucleus. Its function is as follows. Inhibits TNFRSF1A, TNFRSF6/FAS and TNFRSF12 induced apoptosis. Directs the degradation of host NFKBIB but not NFKBIA. Also suppresses host NF-kappa-B activation by interacting with and preventing ubiquitination of host NEMO/IKBKG, the NF-kappa-B essential modulator subunit of the IKK complex. Interferes with host CASP8/caspase-8 recruitment and activation at the death-inducing signaling complex (DISC). May lead to higher virus production and contribute to virus persistence and oncogenicity. Also participates in the inhibition of host autophagy by interacting with host SH3BP4. In Homo sapiens (Human), this protein is Viral CASP8 and FADD-like apoptosis regulator.